The sequence spans 656 residues: MIKSQKEYLERIAYLNTLSHHYYNLDDPIVSDAVYDELYQELKAYEEKNPSHIQANSPTQKVGATATNPFNKNPHLMRMWSLDDVFNQSELQAWLQRILKAYPSASFVCSPKLDGVSLNLLYHHGKLISATTRGNGLEGELVSANAKHIANIPHAIAYKGEIEIRGEVIISKKDFDALNKERLNANEPLFANPRNAASGSLRQLDSEITKKRKLQFIPWGVGKHSLNFLSFKECLDFIVSLGFSAIQYLSLNKNHQEIEENYHTLIREREGFFALLDGMVIVVNELNIQKELGYTQKSPKFACAYKFPALEKHTKIIGVINQVGRSGAITPVALLEPVEIAGAMINRATLHNYSEIEKKNIMLNDRVVVIRSGDVIPKIIKPLESYRDGSQHKIERPKVCPICSYELLCEEIFTYCQNLNCPARLKESLIHFASKDALNIQGLGDKVIEQLFEEKLIVNALDLYALKLEDLMRLDKFKIKKAQNLLDAIQKSKNPPLWRLINALGIEHIGKGASKTLAKYGLNVLEKSEAEFLEMEGFGVEMARSLVNFYASNQEFIRSLFELLNPRNSDMAEEKQKSSSVFNNKTIVLTGTLSKPRQEYAQMLENLGAKISSSVSAKTNFLIVGENAGSKLALAQKHGVSVLNEEELLKRLKELD.

Residues 32-36 and 81-82 each bind NAD(+); these read DAVYD and SL. Catalysis depends on K112, which acts as the N6-AMP-lysine intermediate. NAD(+) contacts are provided by R133, E167, and K306. Zn(2+) contacts are provided by C400, C403, C416, and C421. In terms of domain architecture, BRCT spans 577–656; the sequence is KSSSVFNNKT…ELLKRLKELD (80 aa).

Belongs to the NAD-dependent DNA ligase family. LigA subfamily. The cofactor is Mg(2+). It depends on Mn(2+) as a cofactor.

It catalyses the reaction NAD(+) + (deoxyribonucleotide)n-3'-hydroxyl + 5'-phospho-(deoxyribonucleotide)m = (deoxyribonucleotide)n+m + AMP + beta-nicotinamide D-nucleotide.. In terms of biological role, DNA ligase that catalyzes the formation of phosphodiester linkages between 5'-phosphoryl and 3'-hydroxyl groups in double-stranded DNA using NAD as a coenzyme and as the energy source for the reaction. It is essential for DNA replication and repair of damaged DNA. This chain is DNA ligase, found in Helicobacter pylori (strain HPAG1).